A 448-amino-acid polypeptide reads, in one-letter code: NADP-specific glutamate dehydrogenase (448 aa).

Lys88, Gln109, and Lys112 together coordinate substrate. The active-site Proton donor is Lys124. Gly163 contributes to the substrate binding site. NADP(+) is bound by residues Thr207 and Asn238. A substrate-binding site is contributed by Ser375.

This sequence belongs to the Glu/Leu/Phe/Val dehydrogenases family. Homohexamer.

It catalyses the reaction L-glutamate + NADP(+) + H2O = 2-oxoglutarate + NH4(+) + NADPH + H(+). Its function is as follows. Catalyzes the reversible oxidative deamination of glutamate to alpha-ketoglutarate and ammonia. The sequence is that of NADP-specific glutamate dehydrogenase (gdhA) from Psychrobacter sp. (strain TAD1).